The sequence spans 108 residues: Large ribosomal subunit protein uL24 (108 aa).

This sequence belongs to the universal ribosomal protein uL24 family. Part of the 50S ribosomal subunit.

In terms of biological role, one of two assembly initiator proteins, it binds directly to the 5'-end of the 23S rRNA, where it nucleates assembly of the 50S subunit. One of the proteins that surrounds the polypeptide exit tunnel on the outside of the subunit. This Moorella thermoacetica (strain ATCC 39073 / JCM 9320) protein is Large ribosomal subunit protein uL24.